The sequence spans 287 residues: MGKQPIDLLMQPSWRIIDQSSLGPYFDAKQSFAMDDTLCASVGKGESPATARSWVHHRTIVLGIQDTRLPFLEDGVKLLEDEGYRVIVRNSGGLAVVLDEGVLNISLIFEDEKKGIDIDRGYEAMTELVRRMLRPHHAEIEAYEIKGSYCPGSYDLSIGGRKFAGISQRRLRGGTAVQIYLCADKSGSERADLIRRFYQAALKDKSNDTKGVYPDIRPETMASLSELLRTDITVQDLMLALLTELKELSGRLYAAGLSPEEEMVFEKNLTRMLERNEKVFGTQESLD.

Residues 45–253 (GESPATARSW…ELKELSGRLY (209 aa)) form the BPL/LPL catalytic domain. The Acyl-thioester intermediate role is filled by C150.

Belongs to the octanoyltransferase LipL family.

The catalysed reaction is N(6)-octanoyl-L-lysyl-[glycine-cleavage complex H protein] + L-lysyl-[lipoyl-carrier protein] = N(6)-octanoyl-L-lysyl-[lipoyl-carrier protein] + L-lysyl-[glycine-cleavage complex H protein]. The protein operates within protein modification; protein lipoylation via endogenous pathway; protein N(6)-(lipoyl)lysine from octanoyl-[acyl-carrier-protein]. Catalyzes the amidotransfer (transamidation) of the octanoyl moiety from octanoyl-GcvH to the lipoyl domain of the E2 subunit of lipoate-dependent enzymes. This Bacillus velezensis (strain DSM 23117 / BGSC 10A6 / LMG 26770 / FZB42) (Bacillus amyloliquefaciens subsp. plantarum) protein is Octanoyl-[GcvH]:protein N-octanoyltransferase.